Here is a 143-residue protein sequence, read N- to C-terminus: Potassium voltage-gated channel subfamily E regulatory beta subunit 5 (143 aa).

N-linked (GlcNAc...) asparagine glycosylation is found at Asn-2 and Asn-25. The chain crosses the membrane as a helical span at residues 61 to 81 (LYILLIMIFYACLAGGLILAY). The Cytoplasmic segment spans residues 82–143 (TRSRKLVEAK…PALAQGAERV (62 aa)).

Belongs to the potassium channel KCNE family. In terms of assembly, interacts with KCNQ1; impairs KCNQ1 localization in lipid rafts and only conducts current upon strong and continued depolarization. In terms of tissue distribution, detected in embryonal dorsal root and nerve ganglia, in the somites and in myoepicardial layer of the developing heart wall. Detected at lower levels in the central nervous system (CNS) and in developing limb.

Its subcellular location is the membrane. Its function is as follows. Potassium channel ancillary subunit that is essential for generation of some native K(+) currents by virtue of formation of heteromeric ion channel complex with voltage-gated potassium (Kv) channel pore-forming alpha subunits. Functions as an inhibitory beta-subunit of the repolarizing cardiac potassium ion channel KCNQ1. The chain is Potassium voltage-gated channel subfamily E regulatory beta subunit 5 (Kcne5) from Mus musculus (Mouse).